A 520-amino-acid polypeptide reads, in one-letter code: 5'-nucleotidase domain-containing protein 2 (520 aa).

The active-site Nucleophile is D73. Mg(2+)-binding residues include D73, D75, and D358. Residue D75 is the Proton donor of the active site.

It belongs to the 5'(3')-deoxyribonucleotidase family. As to quaternary structure, interacts with tyrosine 3-monooxygenase TH; the interaction results in reduced phosphorylation and decreased catalytic activity of TH.

The protein localises to the cytoplasm. Promotes dephosphorylation of tyrosine 3-monooxygenase TH which decreases TH catalytic activity and leads to reduced synthesis of catecholamines including dopamine, noradrenaline and adrenaline. The exact mechanism of activity is unknown but may act as a phosphatase or promote the activity of phosphatases or may inhibit phosphorylation by acting as a barrier to interfere with protein kinase access. This Homo sapiens (Human) protein is 5'-nucleotidase domain-containing protein 2 (NT5DC2).